The primary structure comprises 130 residues: Protein ApaG (130 aa).

One can recognise an ApaG domain in the interval 3-127; the sequence is SEVTRSIRVT…FSLDSPHGRS (125 aa).

This is Protein ApaG from Rhodospirillum centenum (strain ATCC 51521 / SW).